The sequence spans 211 residues: Guanylate kinase (211 aa).

Residues 5-185 (GLLLILSSPS…AEEQLKMILS (181 aa)) enclose the Guanylate kinase-like domain. 12-19 (SPSGAGKS) serves as a coordination point for ATP.

The protein belongs to the guanylate kinase family.

The protein localises to the cytoplasm. It carries out the reaction GMP + ATP = GDP + ADP. Essential for recycling GMP and indirectly, cGMP. The polypeptide is Guanylate kinase (Cereibacter sphaeroides (strain ATCC 17023 / DSM 158 / JCM 6121 / CCUG 31486 / LMG 2827 / NBRC 12203 / NCIMB 8253 / ATH 2.4.1.) (Rhodobacter sphaeroides)).